The primary structure comprises 179 residues: ATP synthase subunit delta (179 aa).

The protein belongs to the ATPase delta chain family. In terms of assembly, F-type ATPases have 2 components, F(1) - the catalytic core - and F(0) - the membrane proton channel. F(1) has five subunits: alpha(3), beta(3), gamma(1), delta(1), epsilon(1). F(0) has three main subunits: a(1), b(2) and c(10-14). The alpha and beta chains form an alternating ring which encloses part of the gamma chain. F(1) is attached to F(0) by a central stalk formed by the gamma and epsilon chains, while a peripheral stalk is formed by the delta and b chains.

The protein localises to the cell membrane. In terms of biological role, f(1)F(0) ATP synthase produces ATP from ADP in the presence of a proton or sodium gradient. F-type ATPases consist of two structural domains, F(1) containing the extramembraneous catalytic core and F(0) containing the membrane proton channel, linked together by a central stalk and a peripheral stalk. During catalysis, ATP synthesis in the catalytic domain of F(1) is coupled via a rotary mechanism of the central stalk subunits to proton translocation. This protein is part of the stalk that links CF(0) to CF(1). It either transmits conformational changes from CF(0) to CF(1) or is implicated in proton conduction. The chain is ATP synthase subunit delta from Clostridium botulinum (strain Okra / Type B1).